A 278-amino-acid polypeptide reads, in one-letter code: Malonyl-[acyl-carrier protein] O-methyltransferase (278 aa).

The protein belongs to the methyltransferase superfamily.

The catalysed reaction is malonyl-[ACP] + S-adenosyl-L-methionine = malonyl-[ACP] methyl ester + S-adenosyl-L-homocysteine. Its pathway is cofactor biosynthesis; biotin biosynthesis. Converts the free carboxyl group of a malonyl-thioester to its methyl ester by transfer of a methyl group from S-adenosyl-L-methionine (SAM). It allows to synthesize pimeloyl-ACP via the fatty acid synthetic pathway. In Brevibacillus brevis (strain 47 / JCM 6285 / NBRC 100599), this protein is Malonyl-[acyl-carrier protein] O-methyltransferase.